We begin with the raw amino-acid sequence, 218 residues long: Eukaryotic translation initiation factor 3 subunit K (218 aa).

Position 2 is an N-acetylalanine (Ala2). Thr28 carries the post-translational modification Phosphothreonine. Positions 42–204 (YDLEANLAVL…SIKPKNIVEK (163 aa)) constitute a PCI domain. A Phosphoserine modification is found at Ser217.

It belongs to the eIF-3 subunit K family. Component of the eukaryotic translation initiation factor 3 (eIF-3) complex, which is composed of 13 subunits: EIF3A, EIF3B, EIF3C, EIF3D, EIF3E, EIF3F, EIF3G, EIF3H, EIF3I, EIF3J, EIF3K, EIF3L and EIF3M. The eIF-3 complex appears to include 3 stable modules: module A is composed of EIF3A, EIF3B, EIF3G and EIF3I; module B is composed of EIF3F, EIF3H, and EIF3M; and module C is composed of EIF3C, EIF3D, EIF3E, EIF3K and EIF3L. EIF3C of module C binds EIF3B of module A and EIF3H of module B, thereby linking the three modules. EIF3J is a labile subunit that binds to the eIF-3 complex via EIF3B. The eIF-3 complex interacts with RPS6KB1 under conditions of nutrient depletion. Mitogenic stimulation leads to binding and activation of a complex composed of MTOR and RPTOR, leading to phosphorylation and release of RPS6KB1 and binding of EIF4B to eIF-3. Interacts with CCND3, but not with CCND1 and CCND2.

It localises to the nucleus. Its subcellular location is the cytoplasm. Functionally, component of the eukaryotic translation initiation factor 3 (eIF-3) complex, which is required for several steps in the initiation of protein synthesis. The eIF-3 complex associates with the 40S ribosome and facilitates the recruitment of eIF-1, eIF-1A, eIF-2:GTP:methionyl-tRNAi and eIF-5 to form the 43S pre-initiation complex (43S PIC). The eIF-3 complex stimulates mRNA recruitment to the 43S PIC and scanning of the mRNA for AUG recognition. The eIF-3 complex is also required for disassembly and recycling of post-termination ribosomal complexes and subsequently prevents premature joining of the 40S and 60S ribosomal subunits prior to initiation. The eIF-3 complex specifically targets and initiates translation of a subset of mRNAs involved in cell proliferation, including cell cycling, differentiation and apoptosis, and uses different modes of RNA stem-loop binding to exert either translational activation or repression. This chain is Eukaryotic translation initiation factor 3 subunit K, found in Bos taurus (Bovine).